The primary structure comprises 76 residues: Centromere protein W (76 aa).

It belongs to the CENP-W/WIP1 family. Heterodimer with CENPT; this dimer coassembles with CENPS-CENPX heterodimers at centromeres to form the tetrameric CENP-T-W-S-X complex, which is a subcomplex of the large constitutive centromere-associated network (CCAN, also known as the interphase centromere complex or ICEN). Interacts with NPM1.

It localises to the nucleus. The protein resides in the chromosome. It is found in the centromere. The protein localises to the kinetochore. Functionally, component of the CENPA-NAC (nucleosome-associated) complex, a complex that plays a central role in assembly of kinetochore proteins, mitotic progression and chromosome segregation. The CENPA-NAC complex recruits the CENPA-CAD (nucleosome distal) complex and may be involved in incorporation of newly synthesized CENPA into centromeres. Part of a nucleosome-associated complex that binds specifically to histone H3-containing nucleosomes at the centromere, as opposed to nucleosomes containing CENPA. Component of the heterotetrameric CENP-T-W-S-X complex that binds and supercoils DNA, and plays an important role in kinetochore assembly. CENPW has a fundamental role in kinetochore assembly and function. It is one of the inner kinetochore proteins, with most further proteins binding downstream. Required for normal chromosome organization and normal progress through mitosis. This is Centromere protein W (CENPW) from Gallus gallus (Chicken).